The chain runs to 491 residues: 3-octaprenyl-4-hydroxybenzoate carboxy-lyase (491 aa).

A Mn(2+)-binding site is contributed by N172. Residues 175–177, 189–191, and 194–195 contribute to the prenylated FMN site; these read IYR, RWL, and RG. E238 is a binding site for Mn(2+). D287 functions as the Proton donor in the catalytic mechanism.

This sequence belongs to the UbiD family. Homohexamer. Prenylated FMN is required as a cofactor. The cofactor is Mn(2+).

It is found in the cell membrane. The enzyme catalyses a 4-hydroxy-3-(all-trans-polyprenyl)benzoate + H(+) = a 2-(all-trans-polyprenyl)phenol + CO2. It functions in the pathway cofactor biosynthesis; ubiquinone biosynthesis. In terms of biological role, catalyzes the decarboxylation of 3-octaprenyl-4-hydroxy benzoate to 2-octaprenylphenol, an intermediate step in ubiquinone biosynthesis. The polypeptide is 3-octaprenyl-4-hydroxybenzoate carboxy-lyase (Alcanivorax borkumensis (strain ATCC 700651 / DSM 11573 / NCIMB 13689 / SK2)).